A 195-amino-acid chain; its full sequence is MGGGDGHNDQDKGLFSNLAGGLAGGGHYPPGQYPPAAGGYPPQGYPPAGGGYPPQGYPPAGGGYPPQGYPPAGGGYPPQGYPPAGHHSGSSAPHHSGHGGVAGMVAGGRAAAAAAYGVHHMTQGHGSHGGHGGYAHGAMGMMPGMGAMAMASSSTVSTVMESLSRESTGRARSTDTRSGSNLSFSISSRTFWATK.

Disordered regions lie at residues 23-103 (AGGG…GVAG) and 159-182 (VMESLSRESTGRARSTDTRSGSNL). Residues 47–77 (PAGGGYPPQGYPPAGGGYPPQGYPPAGGGYP) show a composition bias toward gly residues. The span at 82–94 (PPAGHHSGSSAPH) shows a compositional bias: low complexity. The span at 163 to 175 (LSRESTGRARSTD) shows a compositional bias: basic and acidic residues.

The polypeptide is Glycine-rich protein A3 (Daucus carota (Wild carrot)).